Consider the following 110-residue polypeptide: MANQTNSGNERVDLAYRRRKNAEEMRHQMIAFVLMILLTLIAFAAVGYEEFSHWFVVPFILLLAAVQVAFQLYYFMHMSHKGHEFPAMFIYGGVAVMLLLVWAFTTVVWW.

3 helical membrane passes run 29–49 (MIAF…VGYE), 55–75 (FVVP…LYYF), and 89–109 (FIYG…TVVW).

The protein belongs to the cytochrome c oxidase bacterial subunit 4 family.

The protein localises to the cell membrane. The enzyme catalyses 4 Fe(II)-[cytochrome c] + O2 + 8 H(+)(in) = 4 Fe(III)-[cytochrome c] + 2 H2O + 4 H(+)(out). The protein is Cytochrome c oxidase subunit 4B (caaD) of Bacillus sp. (strain PS3).